A 577-amino-acid chain; its full sequence is Arginine--tRNA ligase (577 aa).

A 'HIGH' region motif is present at residues 122–132 (PNVAKEMHVGH).

The protein belongs to the class-I aminoacyl-tRNA synthetase family. As to quaternary structure, monomer.

The protein localises to the cytoplasm. It carries out the reaction tRNA(Arg) + L-arginine + ATP = L-arginyl-tRNA(Arg) + AMP + diphosphate. This Klebsiella pneumoniae (strain 342) protein is Arginine--tRNA ligase.